We begin with the raw amino-acid sequence, 184 residues long: Ribosome-recycling factor (184 aa).

Belongs to the RRF family.

It is found in the cytoplasm. In terms of biological role, responsible for the release of ribosomes from messenger RNA at the termination of protein biosynthesis. May increase the efficiency of translation by recycling ribosomes from one round of translation to another. The chain is Ribosome-recycling factor from Bifidobacterium adolescentis (strain ATCC 15703 / DSM 20083 / NCTC 11814 / E194a).